Reading from the N-terminus, the 542-residue chain is Bifunctional pantoate ligase/cytidylate kinase (542 aa).

Residues 1–280 form a pantoate--beta-alanine ligase region; it reads MHWLRTVAAL…VGQTRLIDNL (280 aa). 28–35 provides a ligand contact to ATP; the sequence is MGSLHEGH. Catalysis depends on His35, which acts as the Proton donor. Gln59 lines the (R)-pantoate pocket. Residue Gln59 coordinates beta-alanine. 150–153 lines the ATP pocket; the sequence is GQKD. Residue Gln156 participates in (R)-pantoate binding. ATP contacts are provided by residues Val179 and 187–190; that span reads CSSR. The tract at residues 281 to 542 is cytidylate kinase; the sequence is LLSPEQGDPL…ERSGPARLDQ (262 aa). Positions 287–311 are disordered; that stretch reads GDPLPERVQHAAPPSSGTTSPPRRP.

The protein in the N-terminal section; belongs to the pantothenate synthetase family. This sequence in the C-terminal section; belongs to the cytidylate kinase family. Type 1 subfamily.

It localises to the cytoplasm. The catalysed reaction is (R)-pantoate + beta-alanine + ATP = (R)-pantothenate + AMP + diphosphate + H(+). The enzyme catalyses CMP + ATP = CDP + ADP. It carries out the reaction dCMP + ATP = dCDP + ADP. It functions in the pathway cofactor biosynthesis; (R)-pantothenate biosynthesis; (R)-pantothenate from (R)-pantoate and beta-alanine: step 1/1. Functionally, catalyzes the condensation of pantoate with beta-alanine in an ATP-dependent reaction via a pantoyl-adenylate intermediate. Catalyzes the transfer of a phosphate group from ATP to either CMP or dCMP to form CDP or dCDP and ADP, respectively. The protein is Bifunctional pantoate ligase/cytidylate kinase of Synechococcus sp. (strain JA-2-3B'a(2-13)) (Cyanobacteria bacterium Yellowstone B-Prime).